The primary structure comprises 223 residues: uncharacterized protein (223 aa).

Residues 1–11 are compositionally biased toward basic residues; that stretch reads MLWVQRKRRRK. The disordered stretch occupies residues 1–37; it reads MLWVQRKRRRKETSECPSDKDKSPESHKAKNESWIKS. Residues 12 to 37 show a composition bias toward basic and acidic residues; that stretch reads ETSECPSDKDKSPESHKAKNESWIKS. Position 43 is a phosphoserine (S43). Disordered stretches follow at residues 49–73 and 196–223; these read LDNNASASGNATQTESGSEEVSSTV and THTFYGHSHHSHHGHPSHQSHSLPNRRH. Over residues 51–61 the composition is skewed to polar residues; it reads NNASASGNATQ. A compositionally biased stretch (low complexity) spans 62–73; the sequence is TESGSEEVSSTV. The span at 202-223 shows a compositional bias: basic residues; that stretch reads HSHHSHHGHPSHQSHSLPNRRH.

This is an uncharacterized protein from Homo sapiens (Human).